The primary structure comprises 403 residues: Phosphoglycerate kinase (403 aa).

Substrate contacts are provided by residues 21-23 (DFN), R36, 59-62 (HLGR), R119, and R154. ATP is bound by residues K207, G299, E330, and 357–360 (GGDA).

This sequence belongs to the phosphoglycerate kinase family. In terms of assembly, monomer.

It localises to the cytoplasm. The enzyme catalyses (2R)-3-phosphoglycerate + ATP = (2R)-3-phospho-glyceroyl phosphate + ADP. It functions in the pathway carbohydrate degradation; glycolysis; pyruvate from D-glyceraldehyde 3-phosphate: step 2/5. This chain is Phosphoglycerate kinase, found in Chlamydia caviae (strain ATCC VR-813 / DSM 19441 / 03DC25 / GPIC) (Chlamydophila caviae).